The chain runs to 450 residues: MSKYVDRVIAEVEKKYADEPEFVQTVEEVLSSLGPVVDAHPEYEEVALLERMVIPERVIEFRVPWEDDNGKVHVNTGYRVQFNGAIGPYKGGLRFAPSVNLSIMKFLGFEQAFKDSLTTLPMGGAKGGSDFDPNGKSDREVMRFCQAFMTELYRHIGPDIDVPAGDLGVGAREIGYMYGQYRKIVGGFYNGVLTGKARSFGGSLVRPEATGYGSVYYVEAVMKHENDTLVGKTVALAGFGNVAWGAAKKLAELGAKAVTLSGPDGYIYDPEGITTEEKINYMLEMRASGRNKVQDYADKFGVQFFPGEKPWGQKVDIIMPCATQNDVDLEQAKKIVANNVKYYIEVANMPTTNEALRFLMQQPNMVVAPSKAVNAGGVLVSGFEMSQNSERLSWTAEEVDSKLHQVMTDIHDGSAAAAERYGLGYNLVAGANIVGFQKIADAMMAQGIAW.

Residues lysine 90, glutamine 111, and lysine 114 each contribute to the substrate site. The Proton donor role is filled by lysine 126. Position 165 (glycine 165) interacts with substrate. Residues threonine 210 and asparagine 241 each contribute to the NAD(+) site. Residue serine 381 coordinates substrate.

Belongs to the Glu/Leu/Phe/Val dehydrogenases family. As to quaternary structure, homohexamer.

It catalyses the reaction L-glutamate + NAD(+) + H2O = 2-oxoglutarate + NH4(+) + NADH + H(+). Its pathway is amino-acid degradation; L-glutamate degradation via hydroxyglutarate pathway; crotonoyl-CoA from L-glutamate: step 1/5. The protein is NAD-specific glutamate dehydrogenase (gdh) of Clostridium symbiosum (Bacteroides symbiosus).